A 323-amino-acid chain; its full sequence is Probable cell division protein WhiA (323 aa).

The H-T-H motif DNA-binding region spans 279–313 (TLKELGEMVSGGKISKSGINHRLRKLDEIAERLRA).

Belongs to the WhiA family.

Its function is as follows. Involved in cell division and chromosome segregation. The chain is Probable cell division protein WhiA from Anoxybacillus flavithermus (strain DSM 21510 / WK1).